A 410-amino-acid chain; its full sequence is Sprouty-related, EVH1 domain-containing protein 2 (410 aa).

The WH1 domain maps to 5-122 (THPDDDSYIV…RGVRKAIEDL (118 aa)). Positions 127–171 (TTSSSTLHNEAELGDDDVFTTATDSSSNSSQKREPTTRTISSPTS) are disordered. Residues 146–156 (TTATDSSSNSS) are compositionally biased toward polar residues. Residues 197–252 (SYPQVTFPEDDEEIVRINPREKIWMTGYEDYRHAPVRGKYLDTTEDADSYVRFAKG) form the KBD domain. A phosphotyrosine mark is found at Tyr-224 and Tyr-227. Residues 274–294 (DPKGSVIKTQPPRAKSRRRKE) form a disordered region. In terms of domain architecture, SPR spans 300-408 (RCVYCRDMFN…CRCCGGKHKA (109 aa)).

As to quaternary structure, homodimer and heterodimer. Able to interact with SPRED1 to form heterodimers. Interacts with RAS. May interact with ZDHHC13 (via ANK repeats) and ZDHHC17 (via ANK repeats). Interacts with TESK1. Interacts with NF1. Phosphorylated on serine and threonine residues. Phosphorylated on tyrosine. Phosphorylation of Tyr-224 and Tyr-227 are required for ubiquitination. Post-translationally, ubiquitinated; leading to degradation by the proteasome. In terms of tissue distribution, predominantly expressed in lung, liver and testis. In testis, it is specially found in mature spermatids projecting into the lumen of the seminiferous. Strongly expressed in glandular epithelia. Also expressed in embryonic tissues such as heart, lung, liver and brain.

It localises to the cell membrane. The protein resides in the cytoplasmic vesicle. The protein localises to the secretory vesicle membrane. It is found in the cytoplasm. Negatively regulates Ras signaling pathways and downstream activation of MAP kinases. Recruits and translocates NF1 to the cell membrane, thereby enabling NF1-dependent hydrolysis of active GTP-bound Ras to inactive GDP-bound Ras. Inhibits fibroblast growth factor (FGF)-induced retinal lens fiber differentiation, probably by inhibiting FGF-mediated phosphorylation of ERK1/2. Inhibits TGFB-induced epithelial-to-mesenchymal transition in lens epithelial cells. The sequence is that of Sprouty-related, EVH1 domain-containing protein 2 (Spred2) from Mus musculus (Mouse).